The following is a 64-amino-acid chain: UPF0370 protein YE1145 (64 aa).

A helical membrane pass occupies residues 3–23; it reads WLADYWWVVLIILVGMILNGI. Residues 36–64 form a disordered region; that stretch reads SNKPEIPPHRDNNAQWDDDDDWPDKDKKK.

Belongs to the UPF0370 family.

It is found in the cell membrane. In Yersinia enterocolitica serotype O:8 / biotype 1B (strain NCTC 13174 / 8081), this protein is UPF0370 protein YE1145.